The following is a 628-amino-acid chain: MSEKKYTFETEVDKLLHLVIHSLYSNREIFLRELVSNSSDAIEKLRYESISNAALNEDDTDYAIRIDFDKDAKTITVSDNGIGMTEEEVIENLGTIAKSGTKKFLESLTGDKSKDNELIGQFGVGFYSSFIVADKVTVRTRKAGQDKSQATKWVSDAQNGFTVETITKEKRGTEVILHIKKEHLDLLEYHVLKGLVNKYSDCINTPIQMKKVEYDKDGKQTVKDEYETVNNTKAIWLRSKDEVTDEEYQEFYKYISHDFADALMWIHNKVEGNLEYNSLLYIPQNKPFDFWNRDKDYGLSLYVRRVFIMENKELLPPYLRFVKGVIDSADLPLNVSREILQHNKVIDKIKKAITTKILSELKKLASKDKEKYQKFWDSFGQVLKEGVSDDYSNKEKIAGLLRFATTQSGDSKQTVSLADYISRMKEGQDTIYYITSDSYKAAANNPQLEAFKKKGIEVILMTDRIDEWMMSTLTEFDGKHMKSIIKGDIDLDKFETPENKEKFEKETKDFEKVLKEIKEVLKDKVEDVRLSKRLTDSPSCVVVNDYGMSLHMQKMMEEAGQGFMPGMGMKPILELNAEHNLVQKLKNEADTEIFADLSELLLLQAMFVEGAKIEDPMAFVKLVNKYIR.

Residues 1–337 (MSEKKYTFET…SADLPLNVSR (337 aa)) form an a; substrate-binding region. Residues 338 to 554 (EILQHNKVID…DYGMSLHMQK (217 aa)) are b. The interval 555–628 (MMEEAGQGFM…FVKLVNKYIR (74 aa)) is c.

This sequence belongs to the heat shock protein 90 family. As to quaternary structure, homodimer.

The protein resides in the cytoplasm. Functionally, molecular chaperone. Has ATPase activity. This is Chaperone protein HtpG from Francisella tularensis subsp. novicida (strain U112).